The primary structure comprises 248 residues: 4-hydroxy-tetrahydrodipicolinate reductase (248 aa).

NAD(+) contacts are provided by residues 8–13 (GAKGRM), 75–77 (GTT), and 99–102 (ATNM). The active-site Proton donor/acceptor is H131. H132 contacts (S)-2,3,4,5-tetrahydrodipicolinate. The active-site Proton donor is K135. Position 141–142 (141–142 (GT)) interacts with (S)-2,3,4,5-tetrahydrodipicolinate.

The protein belongs to the DapB family.

The protein localises to the cytoplasm. The enzyme catalyses (S)-2,3,4,5-tetrahydrodipicolinate + NAD(+) + H2O = (2S,4S)-4-hydroxy-2,3,4,5-tetrahydrodipicolinate + NADH + H(+). It carries out the reaction (S)-2,3,4,5-tetrahydrodipicolinate + NADP(+) + H2O = (2S,4S)-4-hydroxy-2,3,4,5-tetrahydrodipicolinate + NADPH + H(+). The protein operates within amino-acid biosynthesis; L-lysine biosynthesis via DAP pathway; (S)-tetrahydrodipicolinate from L-aspartate: step 4/4. Its function is as follows. Catalyzes the conversion of 4-hydroxy-tetrahydrodipicolinate (HTPA) to tetrahydrodipicolinate. This Campylobacter jejuni subsp. doylei (strain ATCC BAA-1458 / RM4099 / 269.97) protein is 4-hydroxy-tetrahydrodipicolinate reductase.